We begin with the raw amino-acid sequence, 310 residues long: GPN-loop GTPase 2 (310 aa).

An N-acetylalanine modification is found at alanine 2. 19-24 (GSGKTT) contacts GTP. The short motif at 76–78 (GPN) is the Gly-Pro-Asn (GPN)-loop; involved in dimer interface element. 178–181 (SKMD) provides a ligand contact to GTP.

This sequence belongs to the GPN-loop GTPase family. In terms of assembly, heterodimers with GPN1 or GPN3. Binds to RNA polymerase II (RNAPII).

Its function is as follows. Small GTPase required for proper localization of RNA polymerase II and III (RNAPII and RNAPIII). May act at an RNAP assembly step prior to nuclear import. The sequence is that of GPN-loop GTPase 2 from Sus scrofa (Pig).